Consider the following 286-residue polypeptide: Release factor glutamine methyltransferase (286 aa).

Residues 121–125 (GTGTG), Asp144, Trp172, and Asn188 contribute to the S-adenosyl-L-methionine site. 188–191 (NPPY) contacts substrate.

Belongs to the protein N5-glutamine methyltransferase family. PrmC subfamily.

The enzyme catalyses L-glutaminyl-[peptide chain release factor] + S-adenosyl-L-methionine = N(5)-methyl-L-glutaminyl-[peptide chain release factor] + S-adenosyl-L-homocysteine + H(+). Methylates the class 1 translation termination release factors RF1/PrfA and RF2/PrfB on the glutamine residue of the universally conserved GGQ motif. This is Release factor glutamine methyltransferase from Vibrio cholerae serotype O1 (strain ATCC 39315 / El Tor Inaba N16961).